An 842-amino-acid polypeptide reads, in one-letter code: MRQRDLKFTFVVGEGKLAFDVVEFELEEALCEPFRLNLKLASDKNAIDFRQVLDQPGTFTLWQDGRPARYVHGIVSHFTQGSSGFRRTRYELLLEPQLARLELCCNWRIFQEKSVPEILQALLKEHRVLDYEQRIYHEHLPREYCVQAGDSDHYLHDRLAFEEGLVYYFRFDEHRHTLVCSDRLYVQERIAGGPVLFSAQPEGDNPQPVLHSFRYSENVRTARQTQRDYSFKRPTYDQEHHLAGEALEHQGSSYERYDYPGRYKRSGAGRPFSESRLRGHRRDARVASVSGDDPRLIPGHAFALEGHPRADFNAWWRPVRVVHRGTQYAGQEEESADAPLGVSYDLRAELVPEDVEWRPAPLPRPRIDGPQIATVVGPAGEEIHCDEWGRVKVQFPWDREGRHDEFSTCWIRVAQNWAGADWGHMAIPRIGQEVIVDYLDGDCDQPIVTGRTYRATNRPPYALPDHKILSTIKSKEYKGSRANELRIDDTTAQISAALMSDHGASALHLGYLTHPRPEGGKPRGEGFELRTDEHGAVRAAKGLLLSTEEQLRAGAGHLDRGVVVQVLEAALKLARELGDYAGEHQGVGHDAAPQQTLQEAVRDLGHGANDESGKSNGGKPAIALSGPAGIAAATPASLTLAAGEHVDSVARQNQQVTAGQKVVINAGSDIGLFAQGGELRQITHQGPMLLQAQKNDIRLEAEQSVEVSASQQHVLVTAKEHITLMCGGAYLTLKGGNIELGMPGNFVVKAAKHSHVGPAHASTSFNAWDSTPFDDRYVLRDEATLEPLPNIAVEVIRGDGGVVKLMTDSQGRLPKQQHLAMDPVQIRILGKGSHNSDTESNT.

Residues 265-291 (RSGAGRPFSESRLRGHRRDARVASVSG) form a disordered region.

It belongs to the VgrG protein family.

Part of the H2 type VI secretion system (H2-T6SS) specialized secretion system, which delivers several virulence factors in both prokaryotic and eukaryotic cells during infection. May form the spike at the tip of the elongating tube formed by haemolysin co-regulated protein 2a/Hcp2a. In turn, may allow the delivery of the Tle4 antibacterial toxin to target cells where it exerts its toxicity. Also promotes the release of VgrG2b toxin to the host cell. The polypeptide is Type VI secretion system spike protein VgrG2a (Pseudomonas aeruginosa (strain ATCC 15692 / DSM 22644 / CIP 104116 / JCM 14847 / LMG 12228 / 1C / PRS 101 / PAO1)).